A 562-amino-acid polypeptide reads, in one-letter code: Protein wntless (562 aa).

At 1-13 (MSGTILENLSGRK) the chain is on the cytoplasmic side. The chain crosses the membrane as a helical span at residues 14–34 (LSILVATLLLCQVLCFLLGGL). The Lumenal portion of the chain corresponds to 35–239 (YAPLPAGHVT…AIHQNGGFTQ (205 aa)). Asn58 carries an N-linked (GlcNAc...) asparagine glycan. A helical transmembrane segment spans residues 240-260 (IWLLLKTMLFPFVVGIMIWFW). At 261–270 (RRVHLLQRSP) the chain is on the cytoplasmic side. The chain crosses the membrane as a helical span at residues 271 to 291 (ALLEYMLIYLGAALTFLNLPL). Over 292–311 (EYLSLVYEMPYMLLLSDIRQ) the chain is Lumenal. Residues 312 to 332 (GIFYAMLLTFWLVFAGEHMLI) form a helical membrane-spanning segment. At 333–344 (QDAPNKSTIRSR) the chain is on the cytoplasmic side. Residues 345–365 (YWKHLSAVVVGCISLFVFDIC) form a helical membrane-spanning segment. Topologically, residues 366 to 390 (ERGVQLRNPFYSIWTTPLGAKVAMT) are lumenal. The chain crosses the membrane as a helical span at residues 391–411 (FIVLAGVSAAIYFLFLCYMIW). The Cytoplasmic portion of the chain corresponds to 412 to 441 (KVFRNIGDKRTSLPSMSQARRLHYEGLIYR). Residues 442-462 (FKFLMLATLVCAALTVAGFIM) form a helical membrane-spanning segment. The Lumenal portion of the chain corresponds to 463–482 (GQMAEGQWDWNDNVAIQPTS). A helical transmembrane segment spans residues 483–503 (AFLTGVYGMWNIYIFALLILY). The Cytoplasmic segment spans residues 504–562 (APSHKQWPAMHHSDETTQSNENIVASAASEEIEFSHLPSDSNPSEISSLTSFTRKVAFD).

It belongs to the wntless family. Interacts with wg; in the Golgi. Interacts with Vps35, a component of the retromer complex; wls stability is regulated by Vps35.

It localises to the presynaptic cell membrane. The protein resides in the postsynaptic cell membrane. It is found in the cell membrane. The protein localises to the endoplasmic reticulum membrane. Its subcellular location is the endosome membrane. It localises to the golgi apparatus membrane. In terms of biological role, a segment polarity gene required for wingless (wg)-dependent patterning processes, acting in both wg-sending cells and wg-target cells. In non-neuronal cells wls directs wg secretion. The wls traffic loop encompasses the Golgi, the cell surface, an endocytic compartment and a retrograde route leading back to the Golgi, and involves clathrin-mediated endocytosis and the retromer complex (a conserved protein complex consisting of Vps35 and Vps26). In neuronal cells (the larval motorneuron NMJ), the wg signal moves across the synapse via the release of wls-containing exosome-like vesicles. Postsynaptic wls is required for the trafficking of fz2 through the fz2-interacting protein Grip. This is Protein wntless from Drosophila sechellia (Fruit fly).